Here is an 895-residue protein sequence, read N- to C-terminus: Probable LRR receptor-like serine/threonine-protein kinase At5g48740 (895 aa).

The first 16 residues, 1-16 (MLFWVLLSSFCVFCFS), serve as a signal peptide directing secretion. Residues 17 to 544 (SPDGFLSLSC…INKKQRKQNR (528 aa)) are Extracellular-facing. N-linked (GlcNAc...) asparagine glycans are attached at residues Asn-36, Asn-50, Asn-60, Asn-140, Asn-195, Asn-234, and Asn-318. LRR repeat units follow at residues 385–407 (RVTS…GDLL), 408–430 (DLKT…GSLK), 431–453 (DLQK…EDLV), 454–477 (NLEV…GKLK), 478–500 (KLRL…LNIT), and 511–532 (CLSF…PQVT). 5 N-linked (GlcNAc...) asparagine glycosylation sites follow: Asn-416, Asn-436, Asn-462, Asn-498, and Asn-521. The helical transmembrane segment at 545–565 (IAILLGVSGGALFATFLVFVF) threads the bilayer. Residues 566–895 (MSIFTRRQRN…SYLAASAHTD (330 aa)) are Cytoplasmic-facing. Residues 606-888 (RNFKEVIGRG…EAYSLQLSYL (283 aa)) enclose the Protein kinase domain. ATP is bound by residues 612–620 (IGRGSFGAV) and Lys-634. The residue at position 679 (Tyr-679) is a Phosphotyrosine. Residue Asp-732 is the Proton acceptor of the active site. Ser-736 bears the Phosphoserine mark. 2 positions are modified to phosphothreonine: Thr-767 and Thr-772. Tyr-780 carries the phosphotyrosine modification.

It belongs to the protein kinase superfamily. Ser/Thr protein kinase family.

Its subcellular location is the membrane. The catalysed reaction is L-seryl-[protein] + ATP = O-phospho-L-seryl-[protein] + ADP + H(+). The enzyme catalyses L-threonyl-[protein] + ATP = O-phospho-L-threonyl-[protein] + ADP + H(+). The sequence is that of Probable LRR receptor-like serine/threonine-protein kinase At5g48740 from Arabidopsis thaliana (Mouse-ear cress).